An 89-amino-acid polypeptide reads, in one-letter code: Cell division topological specificity factor (89 aa).

The protein belongs to the MinE family.

Functionally, prevents the cell division inhibition by proteins MinC and MinD at internal division sites while permitting inhibition at polar sites. This ensures cell division at the proper site by restricting the formation of a division septum at the midpoint of the long axis of the cell. The chain is Cell division topological specificity factor from Edwardsiella ictaluri (strain 93-146).